The primary structure comprises 114 residues: UPF0102 protein HP_0823 (114 aa).

It belongs to the UPF0102 family.

In Helicobacter pylori (strain ATCC 700392 / 26695) (Campylobacter pylori), this protein is UPF0102 protein HP_0823.